A 283-amino-acid chain; its full sequence is Large ribosomal subunit protein uL2 (283 aa).

Disordered stretches follow at residues 34 to 53 (TEPY…TARH) and 224 to 283 (AMNP…KKKK). Residues 232 to 245 (NGGGQGKSKGGGGW) show a composition bias toward gly residues. Positions 256–268 (AKGKKTRHKRKNS) are enriched in basic residues.

This sequence belongs to the universal ribosomal protein uL2 family. Part of the 50S ribosomal subunit. Forms a bridge to the 30S subunit in the 70S ribosome.

Its function is as follows. One of the primary rRNA binding proteins. Required for association of the 30S and 50S subunits to form the 70S ribosome, for tRNA binding and peptide bond formation. It has been suggested to have peptidyltransferase activity; this is somewhat controversial. Makes several contacts with the 16S rRNA in the 70S ribosome. The sequence is that of Large ribosomal subunit protein uL2 from Methylacidiphilum infernorum (isolate V4) (Methylokorus infernorum (strain V4)).